The primary structure comprises 600 residues: Elongation factor 4 (600 aa).

In terms of domain architecture, tr-type G spans 5-187 (KYIRNFSIIA…AIVSKLPPPK (183 aa)). GTP is bound by residues 17–22 (DHGKST) and 134–137 (NKLD).

The protein belongs to the TRAFAC class translation factor GTPase superfamily. Classic translation factor GTPase family. LepA subfamily.

It is found in the cell inner membrane. The catalysed reaction is GTP + H2O = GDP + phosphate + H(+). Functionally, required for accurate and efficient protein synthesis under certain stress conditions. May act as a fidelity factor of the translation reaction, by catalyzing a one-codon backward translocation of tRNAs on improperly translocated ribosomes. Back-translocation proceeds from a post-translocation (POST) complex to a pre-translocation (PRE) complex, thus giving elongation factor G a second chance to translocate the tRNAs correctly. Binds to ribosomes in a GTP-dependent manner. The chain is Elongation factor 4 from Rickettsia rickettsii (strain Iowa).